We begin with the raw amino-acid sequence, 396 residues long: Actin-related protein 6 (396 aa).

Belongs to the actin family. ARP6 subfamily. As to quaternary structure, interacts with CBX1 and CBX3.

It is found in the cytoplasm. The protein resides in the cytoskeleton. Its subcellular location is the nucleus. The protein localises to the nucleolus. Its function is as follows. Required for formation and/or maintenance of the proper nucleolar structure and function. Plays a dual role in the regulation of ribosomal DNA (rDNA) transcription. In the presence of high glucose, it maintains active rDNA transcription through H2A.Z deposition and under glucose starvation, is required for the repression of rDNA transcription, and this function may be independent of H2A.Z. This is Actin-related protein 6 (ACTR6) from Gallus gallus (Chicken).